A 36-amino-acid polypeptide reads, in one-letter code: MAASFLPSILVPLVGLIFPAFSMALFFLYVQTDDIA.

A helical transmembrane segment spans residues 9 to 29 (ILVPLVGLIFPAFSMALFFLY).

It belongs to the PsaI family.

The protein localises to the plastid. It localises to the chloroplast thylakoid membrane. Functionally, may help in the organization of the PsaL subunit. The chain is Photosystem I reaction center subunit VIII from Thalassiosira pseudonana (Marine diatom).